The following is a 263-amino-acid chain: MPELPEVETIKRTLAPKILGKTIYRVEVYLPKIIKNVSVEEFTRRVVGKEIVALKRRGKYLLIDLSGKETVTVHLRMTGKLLILPKGSPKDKHTHAIFDLGDLELHFNDIRQFGGFSFEMPEIGPEPLEDEFTPEYLKTKLKASQKNLKAVLLDQKIIAGIGNIYADEILFEAGLSPKRIAASLSEDEAEELFKAIRKILALGIEYRGTSIRDYVDAENQQGSFQRLLKVYGKNGSLCVRCNNVLIRERHAGRSTHYCPHCQK.

Pro2 acts as the Schiff-base intermediate with DNA in catalysis. The active-site Proton donor is the Glu3. Residue Lys59 is the Proton donor; for beta-elimination activity of the active site. DNA-binding residues include His93 and Arg111. The FPG-type zinc-finger motif lies at 229 to 263 (KVYGKNGSLCVRCNNVLIRERHAGRSTHYCPHCQK). Arg253 (proton donor; for delta-elimination activity) is an active-site residue.

It belongs to the FPG family. Monomer. Requires Zn(2+) as cofactor.

It catalyses the reaction Hydrolysis of DNA containing ring-opened 7-methylguanine residues, releasing 2,6-diamino-4-hydroxy-5-(N-methyl)formamidopyrimidine.. The enzyme catalyses 2'-deoxyribonucleotide-(2'-deoxyribose 5'-phosphate)-2'-deoxyribonucleotide-DNA = a 3'-end 2'-deoxyribonucleotide-(2,3-dehydro-2,3-deoxyribose 5'-phosphate)-DNA + a 5'-end 5'-phospho-2'-deoxyribonucleoside-DNA + H(+). In terms of biological role, involved in base excision repair of DNA damaged by oxidation or by mutagenic agents. Acts as a DNA glycosylase that recognizes and removes damaged bases. Has a preference for oxidized purines, such as 7,8-dihydro-8-oxoguanine (8-oxoG). Has AP (apurinic/apyrimidinic) lyase activity and introduces nicks in the DNA strand. Cleaves the DNA backbone by beta-delta elimination to generate a single-strand break at the site of the removed base with both 3'- and 5'-phosphates. The sequence is that of Formamidopyrimidine-DNA glycosylase from Carboxydothermus hydrogenoformans (strain ATCC BAA-161 / DSM 6008 / Z-2901).